A 452-amino-acid polypeptide reads, in one-letter code: Chaperone SurA (452 aa).

The first 28 residues, 1–28 (MKKTLRFAAVVSSLAAASALLAAAPAAA), serve as a signal peptide directing secretion. PpiC domains follow at residues 186 to 288 (QQDL…RLVD) and 302 to 400 (IVQT…QVLS).

Its subcellular location is the periplasm. It carries out the reaction [protein]-peptidylproline (omega=180) = [protein]-peptidylproline (omega=0). Chaperone involved in the correct folding and assembly of outer membrane proteins. Recognizes specific patterns of aromatic residues and the orientation of their side chains, which are found more frequently in integral outer membrane proteins. May act in both early periplasmic and late outer membrane-associated steps of protein maturation. The protein is Chaperone SurA of Burkholderia lata (strain ATCC 17760 / DSM 23089 / LMG 22485 / NCIMB 9086 / R18194 / 383).